Consider the following 158-residue polypeptide: Glycine/sarcosine/betaine reductase complex component A (158 aa).

Sec44 is a catalytic residue. A non-standard amino acid (selenocysteine) is located at residue Sec44.

It belongs to the GrdA family. As to quaternary structure, monomer. Component of the glycine, sarcosine and betaine reductase complexes, together with components B and C.

It carries out the reaction acetyl phosphate + [thioredoxin]-disulfide + NH4(+) + H2O = [thioredoxin]-dithiol + glycine + phosphate + H(+). It catalyses the reaction acetyl phosphate + methylamine + [thioredoxin]-disulfide + H2O = sarcosine + [thioredoxin]-dithiol + phosphate + H(+). The catalysed reaction is acetyl phosphate + trimethylamine + [thioredoxin]-disulfide + H2O = glycine betaine + [thioredoxin]-dithiol + phosphate + H(+). Its function is as follows. In the first step of glycine, betaine and sarcosine reductases, the substrate is bound to component PB via a Schiff base intermediate. Then the PB-activated substrate is nucleophilically attacked by the selenol anion of component PA to transform it to a carboxymethylated selenoether and the respective amine. By action of component PC, acetyl phosphate is formed, leaving component PA in its oxidized state. Finally component PA becomes reduced by the thioredoxin system to start a new catalytic cycle of reductive deamination. This chain is Glycine/sarcosine/betaine reductase complex component A, found in Clostridium botulinum (strain ATCC 19397 / Type A).